The chain runs to 128 residues: Large ribosomal subunit protein bL20c (128 aa).

It belongs to the bacterial ribosomal protein bL20 family.

The protein resides in the plastid. In terms of biological role, binds directly to 23S ribosomal RNA and is necessary for the in vitro assembly process of the 50S ribosomal subunit. It is not involved in the protein synthesizing functions of that subunit. This chain is Large ribosomal subunit protein bL20c (rpl20), found in Epifagus virginiana (Beechdrops).